The chain runs to 199 residues: Large ribosomal subunit protein bL25 (199 aa).

Residues 1–21 (MNIEKTLSVQKREGYGKGPSG) are disordered.

The protein belongs to the bacterial ribosomal protein bL25 family. CTC subfamily. In terms of assembly, part of the 50S ribosomal subunit; part of the 5S rRNA/L5/L18/L25 subcomplex. Contacts the 5S rRNA. Binds to the 5S rRNA independently of L5 and L18.

This is one of the proteins that binds to the 5S RNA in the ribosome where it forms part of the central protuberance. This Desulfovibrio desulfuricans (strain ATCC 27774 / DSM 6949 / MB) protein is Large ribosomal subunit protein bL25.